The chain runs to 247 residues: ATP synthase subunit a, chloroplastic (247 aa).

5 helical membrane passes run 38 to 58 (QVLI…IIAV), 95 to 115 (VPFI…GALL), 134 to 154 (INTT…AGLT), 199 to 219 (LVVV…VMFL), and 220 to 240 (GLFT…AYIG).

It belongs to the ATPase A chain family. F-type ATPases have 2 components, CF(1) - the catalytic core - and CF(0) - the membrane proton channel. CF(1) has five subunits: alpha(3), beta(3), gamma(1), delta(1), epsilon(1). CF(0) has four main subunits: a, b, b' and c.

Its subcellular location is the plastid. It is found in the chloroplast thylakoid membrane. Key component of the proton channel; it plays a direct role in the translocation of protons across the membrane. The protein is ATP synthase subunit a, chloroplastic of Carica papaya (Papaya).